We begin with the raw amino-acid sequence, 225 residues long: Uracil-DNA glycosylase (225 aa).

The Proton acceptor role is filled by Asp64.

This sequence belongs to the uracil-DNA glycosylase (UDG) superfamily. UNG family.

The protein localises to the cytoplasm. The enzyme catalyses Hydrolyzes single-stranded DNA or mismatched double-stranded DNA and polynucleotides, releasing free uracil.. Functionally, excises uracil residues from the DNA which can arise as a result of misincorporation of dUMP residues by DNA polymerase or due to deamination of cytosine. The chain is Uracil-DNA glycosylase from Agathobacter rectalis (strain ATCC 33656 / DSM 3377 / JCM 17463 / KCTC 5835 / VPI 0990) (Eubacterium rectale).